The chain runs to 455 residues: 5'-nucleotidase domain-containing protein 1 (455 aa).

The active-site Nucleophile is the D16. The Mg(2+) site is built by D16 and D18. D18 functions as the Proton donor in the catalytic mechanism. N6-acetyllysine is present on K171. Position 313 (D313) interacts with Mg(2+). The segment covering 339-364 has biased composition (basic and acidic residues); it reads GDEGTRSQRPEESEPLEKKGKYEGPK. Residues 339–368 are disordered; it reads GDEGTRSQRPEESEPLEKKGKYEGPKAKPL.

The protein belongs to the 5'(3')-deoxyribonucleotidase family.

This chain is 5'-nucleotidase domain-containing protein 1 (NT5DC1), found in Homo sapiens (Human).